The sequence spans 383 residues: ATP phosphoribosyltransferase regulatory subunit (383 aa).

Belongs to the class-II aminoacyl-tRNA synthetase family. HisZ subfamily. As to quaternary structure, heteromultimer composed of HisG and HisZ subunits.

The protein localises to the cytoplasm. Its pathway is amino-acid biosynthesis; L-histidine biosynthesis; L-histidine from 5-phospho-alpha-D-ribose 1-diphosphate: step 1/9. Required for the first step of histidine biosynthesis. May allow the feedback regulation of ATP phosphoribosyltransferase activity by histidine. This chain is ATP phosphoribosyltransferase regulatory subunit, found in Neisseria gonorrhoeae (strain NCCP11945).